The sequence spans 337 residues: Phosphate acyltransferase (337 aa).

It belongs to the PlsX family. As to quaternary structure, homodimer. Probably interacts with PlsY.

It is found in the cytoplasm. The enzyme catalyses a fatty acyl-[ACP] + phosphate = an acyl phosphate + holo-[ACP]. It functions in the pathway lipid metabolism; phospholipid metabolism. In terms of biological role, catalyzes the reversible formation of acyl-phosphate (acyl-PO(4)) from acyl-[acyl-carrier-protein] (acyl-ACP). This enzyme utilizes acyl-ACP as fatty acyl donor, but not acyl-CoA. This is Phosphate acyltransferase from Latilactobacillus sakei subsp. sakei (strain 23K) (Lactobacillus sakei subsp. sakei).